A 561-amino-acid polypeptide reads, in one-letter code: Mesoderm induction early response protein 2 (561 aa).

Disordered stretches follow at residues 1 to 28 and 52 to 188; these read MAEASSLERQSPGAASCLPHSLCPGEPN and QNYG…EDPL. S11 is subject to Phosphoserine. Over residues 140 to 165 the composition is skewed to polar residues; the sequence is QSSADDLTPSVTSHEASDLFPSQSGS. Positions 195–292 constitute an ELM2 domain; sequence KEIMVGPQFQ…EALRRLRFNV (98 aa). The region spanning 297-349 is the SANT domain; sequence DGLCAWSEEERRNFEHGFRVHGKNFHLIQANKVRTRSVGECVEYYYLWKKSER. Residues 360 to 515 form a disordered region; that stretch reads GRRKYGPSGN…DGEPEETVGP (156 aa). Low complexity predominate over residues 417-428; it reads LSMGSSMSRSLG. Residues 439 to 451 show a composition bias toward pro residues; it reads SSEPGPRLFPPLD. The segment covering 453 to 482 has biased composition (low complexity); that stretch reads PSALPSSRRPPALAEPAFFPPATAAPEPGA.

Part of a complex containing at least CDYL, MIER1, MIER2, HDAC1 and HDAC2.

The protein resides in the nucleus. In terms of biological role, transcriptional repressor. The polypeptide is Mesoderm induction early response protein 2 (MIER2) (Bos taurus (Bovine)).